We begin with the raw amino-acid sequence, 527 residues long: Catalase (527 aa).

The segment covering 1-22 has biased composition (basic and acidic residues); it reads MADNRDPASDQMKHWKEQRAAQ. The tract at residues 1-32 is disordered; it reads MADNRDPASDQMKHWKEQRAAQKPDILTTGSG. An N-acetylalanine modification is found at Ala-2. Ser-9 carries the post-translational modification Phosphoserine. Lys-13 bears the N6-succinyllysine mark. Residues His-75 and Asn-148 contribute to the active site. Residues His-194, Ser-201, Arg-203, and Asn-213 each contribute to the NADP(+) site. Lys-221 bears the N6-succinyllysine mark. At Lys-233 the chain carries N6-acetyllysine. Lys-237, Trp-303, and His-305 together coordinate NADP(+). Tyr-358 contributes to the heme binding site. Residues Ser-417 and Ser-434 each carry the phosphoserine modification. Lys-480 is modified (N6-acetyllysine; alternate). The residue at position 480 (Lys-480) is an N6-succinyllysine; alternate. At Lys-499 the chain carries N6-acetyllysine. Residue Thr-511 is modified to Phosphothreonine. Residue Ser-517 is modified to Phosphoserine. The short motif at 524–527 is the Microbody targeting signal; atypical element; it reads KANL.

Belongs to the catalase family. In terms of assembly, homotetramer. Interacts (via microbody targeting signal) with PEX5, monomeric form interacts with PEX5, leading to its translocation into peroxisomes. It depends on heme as a cofactor. The cofactor is NADP(+).

It is found in the peroxisome matrix. The enzyme catalyses 2 H2O2 = O2 + 2 H2O. Catalyzes the degradation of hydrogen peroxide (H(2)O(2)) generated by peroxisomal oxidases to water and oxygen, thereby protecting cells from the toxic effects of hydrogen peroxide. Promotes growth of cells including T-cells, B-cells, myeloid leukemia cells, melanoma cells, mastocytoma cells and normal and transformed fibroblast cells. In Sus scrofa (Pig), this protein is Catalase (CAT).